Here is a 658-residue protein sequence, read N- to C-terminus: Serine/threonine-protein kinase shk1/pak1 (658 aa).

Disordered regions lie at residues 1–21, 39–104, 126–147, and 213–365; these read MERG…ITPI, RKLK…SYDE, GGSS…STVI, and GAKP…QQSN. The span at 66–98 shows a compositional bias: polar residues; the sequence is PLSQSRTTVSRVSLGSRQHSSSSIRKLQTNVSD. Positions 129–140 are enriched in low complexity; the sequence is SPTSSYGSGSAS. The CRIB domain maps to 147-160; that stretch reads ISSPFDPKHVTHVG. Low complexity-rich tracts occupy residues 226-254 and 262-272; these read PLLS…LYPS and ASSSSSPLLSS. Polar residues predominate over residues 273–300; that stretch reads QTVKTTTSNASRQPSPLVSSKSTDNIIR. Phosphoserine is present on residues Ser-301 and Ser-303. The region spanning 386–637 is the Protein kinase domain; it reads YRNFVKIGQG…SGELLRHPFL (252 aa). Residues 392–400 and Lys-415 each bind ATP; that span reads IGQGASGDV. Catalysis depends on Asp-505, which acts as the Proton acceptor.

The protein belongs to the protein kinase superfamily. STE Ser/Thr protein kinase family. STE20 subfamily. As to quaternary structure, forms an activated complex with GTP-bound ras-like cdc42. Interacts with skb1 and the SH3 domain of skb5 via its amino-terminal regulatory domain. Skb1, cdc42 and shk1 are able to form a ternary complex in vivo. Interacts with rga8 and may interact with byr2. In terms of processing, autophosphorylated on serine residues.

The protein resides in the cytoplasm. The protein localises to the cytoskeleton. It is found in the spindle. The catalysed reaction is L-seryl-[protein] + ATP = O-phospho-L-seryl-[protein] + ADP + H(+). It catalyses the reaction L-threonyl-[protein] + ATP = O-phospho-L-threonyl-[protein] + ADP + H(+). MAP4K component of the MAPK pathway required for the mating pheromone response. Phosphorylates histone H2B to form H2BS10ph. Phosphorylates tea1. Required for skb1-dependent mitotic inhibitory function. Regulates microtubule dynamics and cell polarity. The chain is Serine/threonine-protein kinase shk1/pak1 (shk1) from Schizosaccharomyces pombe (strain 972 / ATCC 24843) (Fission yeast).